Here is a 443-residue protein sequence, read N- to C-terminus: Tubulin beta chain (443 aa).

The GTP site is built by glutamine 11, glutamate 69, serine 138, glycine 142, threonine 143, glycine 144, asparagine 204, and asparagine 226. Glutamate 69 is a Mg(2+) binding site.

It belongs to the tubulin family. In terms of assembly, dimer of alpha and beta chains. A typical microtubule is a hollow water-filled tube with an outer diameter of 25 nm and an inner diameter of 15 nM. Alpha-beta heterodimers associate head-to-tail to form protofilaments running lengthwise along the microtubule wall with the beta-tubulin subunit facing the microtubule plus end conferring a structural polarity. Microtubules usually have 13 protofilaments but different protofilament numbers can be found in some organisms and specialized cells. The cofactor is Mg(2+).

It is found in the cytoplasm. The protein resides in the cytoskeleton. Functionally, tubulin is the major constituent of microtubules, a cylinder consisting of laterally associated linear protofilaments composed of alpha- and beta-tubulin heterodimers. Microtubules grow by the addition of GTP-tubulin dimers to the microtubule end, where a stabilizing cap forms. Below the cap, tubulin dimers are in GDP-bound state, owing to GTPase activity of alpha-tubulin. The protein is Tubulin beta chain of Thalassiosira weissflogii (Marine diatom).